Consider the following 134-residue polypeptide: uncharacterized protein (134 aa).

Residues 4–24 (NLLILLSLLLVVVAIMWWLYE) traverse the membrane as a helical segment.

Its subcellular location is the membrane. This is an uncharacterized protein from Invertebrate iridescent virus 6 (IIV-6).